A 490-amino-acid polypeptide reads, in one-letter code: Adenylosuccinate lyase (490 aa).

Ala2 bears the N-acetylalanine mark. Residues 26 to 27 (RY), 91 to 93 (RHD), and 117 to 118 (TS) each bind substrate. N6-acetyllysine is present on Lys153. His165 acts as the Proton donor/acceptor in catalysis. Residue Gln247 participates in substrate binding. The Proton donor/acceptor role is filled by Ser295. Residue Lys301 is modified to N6-acetyllysine. Residues Arg309, Arg335, Ser340, and Arg344 each contribute to the substrate site. Lys421 participates in a covalent cross-link: Glycyl lysine isopeptide (Lys-Gly) (interchain with G-Cter in SUMO1).

This sequence belongs to the lyase 1 family. Adenylosuccinate lyase subfamily. In terms of assembly, homotetramer. Residues from neighboring subunits contribute catalytic and substrate-binding residues to each active site.

The catalysed reaction is N(6)-(1,2-dicarboxyethyl)-AMP = fumarate + AMP. It carries out the reaction (2S)-2-[5-amino-1-(5-phospho-beta-D-ribosyl)imidazole-4-carboxamido]succinate = 5-amino-1-(5-phospho-beta-D-ribosyl)imidazole-4-carboxamide + fumarate. It participates in purine metabolism; AMP biosynthesis via de novo pathway; AMP from IMP: step 2/2. Its pathway is purine metabolism; IMP biosynthesis via de novo pathway; 5-amino-1-(5-phospho-D-ribosyl)imidazole-4-carboxamide from 5-amino-1-(5-phospho-D-ribosyl)imidazole-4-carboxylate: step 2/2. In terms of biological role, catalyzes two non-sequential steps in de novo AMP synthesis: converts (S)-2-(5-amino-1-(5-phospho-D-ribosyl)imidazole-4-carboxamido)succinate (SAICAR) to fumarate plus 5-amino-1-(5-phospho-D-ribosyl)imidazole-4-carboxamide, and thereby also contributes to de novo IMP synthesis, and converts succinyladenosine monophosphate (SAMP) to AMP and fumarate. The sequence is that of Adenylosuccinate lyase (ADSL) from Bos taurus (Bovine).